Consider the following 130-residue polypeptide: Large ribosomal subunit protein bL21 (130 aa).

The interval 103–130 (AGGKTSKAEPRKTRKAEPAAESAPAAAE) is disordered. A compositionally biased stretch (basic and acidic residues) spans 108-120 (SKAEPRKTRKAEP). Low complexity predominate over residues 121–130 (AAESAPAAAE).

Belongs to the bacterial ribosomal protein bL21 family. Part of the 50S ribosomal subunit. Contacts protein L20.

Its function is as follows. This protein binds to 23S rRNA in the presence of protein L20. The sequence is that of Large ribosomal subunit protein bL21 from Methylorubrum extorquens (strain CM4 / NCIMB 13688) (Methylobacterium extorquens).